Reading from the N-terminus, the 239-residue chain is Small ribosomal subunit protein uS3 (239 aa).

The 69-residue stretch at 39–107 (IREFIKEECK…ELHLNIVEVR (69 aa)) folds into the KH type-2 domain. The segment covering 212 to 221 (PQARDRKAQE) has biased composition (basic and acidic residues). Positions 212–239 (PQARDRKAQELQDGPAPRGAGGNRRGDR) are disordered. Gly residues predominate over residues 230–239 (GAGGNRRGDR).

This sequence belongs to the universal ribosomal protein uS3 family. Part of the 30S ribosomal subunit. Forms a tight complex with proteins S10 and S14.

Its function is as follows. Binds the lower part of the 30S subunit head. Binds mRNA in the 70S ribosome, positioning it for translation. The sequence is that of Small ribosomal subunit protein uS3 from Ruegeria sp. (strain TM1040) (Silicibacter sp.).